The following is a 194-amino-acid chain: Orotate phosphoribosyltransferase (194 aa).

5-phospho-alpha-D-ribose 1-diphosphate is bound at residue 114–122 (EDVVTTGKS). The orotate site is built by threonine 118 and arginine 146.

This sequence belongs to the purine/pyrimidine phosphoribosyltransferase family. PyrE subfamily. In terms of assembly, homodimer. Mg(2+) is required as a cofactor.

It catalyses the reaction orotidine 5'-phosphate + diphosphate = orotate + 5-phospho-alpha-D-ribose 1-diphosphate. The protein operates within pyrimidine metabolism; UMP biosynthesis via de novo pathway; UMP from orotate: step 1/2. Catalyzes the transfer of a ribosyl phosphate group from 5-phosphoribose 1-diphosphate to orotate, leading to the formation of orotidine monophosphate (OMP). This is Orotate phosphoribosyltransferase from Clostridioides difficile (strain 630) (Peptoclostridium difficile).